Here is a 321-residue protein sequence, read N- to C-terminus: Capsid protein (321 aa).

Residues 1 to 43 (MSGEQTEQISKDKAVAAEQARKEQIAEGKKAAESPEVERRKKN) are disordered. A compositionally biased stretch (basic and acidic residues) spans 9 to 39 (ISKDKAVAAEQARKEQIAEGKKAAESPEVER).

Belongs to the potexviruses coat protein family.

It localises to the virion. Required for genome encapsidation. Forms ribonucleoprotein complexes along with TGB1 helicase and viral RNA. This Poplar mosaic virus (isolate ATCC Pv275) (PMV) protein is Capsid protein.